We begin with the raw amino-acid sequence, 620 residues long: MSFDIAKYPTLALVDSTQELRLLPKESLPKLCDELRRYLLDSVSRSSGHFASGLGTVELTVALHYVYNTPFDRLIWDVGHQAYPHKILTGRRDKIGTIRQKGGLHPFPWRGESEYDVLSVGHSSTSISAGIGVAIAAAKEDKQRRAVCVIGDGAITAGMAFEAMNHAGDIKPDLLVVLNDNEMSISENVGALNNHLAQLLSGKLYSTLREGGKKVFSGVPPIKELLKRTEEHIKGMVVPGTLFEELGFNYIGPVDGHDVLGLVSTLKNMRDLKGPQFLHIMTKKGRGYEPAEKDPITFHAVPKFDHTSGVLPKSSGGLPSYSKIFGDWLCETAAKDNKLMAITPAMREGSGMVEFSKKFPDRYFDVAIAEQHAVTFAAGLAIGDYKPVVAIYSTFLQRAYDQVIHDVAIQKLPVLFTIDRAGIVGADGQTHQGAFDLSFLRCIPDMVVMTPSDENECRQMLYTGYHYSDGPCAVRYPRGSGTGATLEPLASLPIGKGVVKRQGEKIAILNFGTLLPEAAAVADKLNATLVDMRFVKPLDTALILQLAGEHDALVTLEENAIMGGAGSGVNEVLMAHRRAVPVLNIGLPDYFIPQGTQEEIRADLGLDAAGIEAKIRDWLA.

Residues histidine 80 and 121-123 contribute to the thiamine diphosphate site; that span reads GHS. Aspartate 152 contacts Mg(2+). Thiamine diphosphate-binding positions include 153 to 154, asparagine 181, tyrosine 288, and glutamate 370; that span reads GA. Asparagine 181 contributes to the Mg(2+) binding site.

This sequence belongs to the transketolase family. DXPS subfamily. Homodimer. The cofactor is Mg(2+). Requires thiamine diphosphate as cofactor.

It carries out the reaction D-glyceraldehyde 3-phosphate + pyruvate + H(+) = 1-deoxy-D-xylulose 5-phosphate + CO2. It functions in the pathway metabolic intermediate biosynthesis; 1-deoxy-D-xylulose 5-phosphate biosynthesis; 1-deoxy-D-xylulose 5-phosphate from D-glyceraldehyde 3-phosphate and pyruvate: step 1/1. Functionally, catalyzes the acyloin condensation reaction between C atoms 2 and 3 of pyruvate and glyceraldehyde 3-phosphate to yield 1-deoxy-D-xylulose-5-phosphate (DXP). The protein is 1-deoxy-D-xylulose-5-phosphate synthase of Klebsiella pneumoniae subsp. pneumoniae (strain ATCC 700721 / MGH 78578).